A 78-amino-acid chain; its full sequence is FXYD domain-containing ion transport regulator 7 (78 aa).

Residues 1 to 22 lie on the Extracellular side of the membrane; that stretch reads MATQVPTKVPQDPDPFYYDYDT. O-linked (GlcNAc) threonine glycans are attached at residues T3 and T7. A helical membrane pass occupies residues 23–43; the sequence is VQTVGMTLATILFLLGILIIL. Residues 44–78 lie on the Cytoplasmic side of the membrane; it reads SKKVKCRKADSRSESPTCKSCKSELPSSAPGGGGV. Positions 52-78 are disordered; sequence ADSRSESPTCKSCKSELPSSAPGGGGV. At S71 the chain carries Phosphoserine.

This sequence belongs to the FXYD family. As to quaternary structure, regulatory subunit of the sodium/potassium-transporting ATPase which is composed of a catalytic alpha subunit, a non-catalytic beta subunit and an additional regulatory subunit. The regulatory subunit, a member of the FXYD protein family, modulates the enzymatic activity in a tissue- and isoform-specific way by changing affinities of the Na+/K+-ATPase toward Na(+), K(+) or ATP. In terms of processing, O-glycosylated; required for stabilization and translocation to the plasma membrane.

The protein resides in the cell membrane. Functionally, associates with and regulates the activity of the sodium/potassium-transporting ATPase (NKA) which catalyzes the hydrolysis of ATP coupled with the exchange of Na(+) and K(+) ions across the plasma membrane. Reduces the apparent affinity for external K(+), an effect that depends on the presence of external Na(+) and voltage. Increases the apparent affinity for intracellular Na(+). In Bos taurus (Bovine), this protein is FXYD domain-containing ion transport regulator 7 (FXYD7).